Here is a 404-residue protein sequence, read N- to C-terminus: GTPase Obg (404 aa).

One can recognise an Obg domain in the interval 1–159 (MKFIDEARIE…RALRLELKVL (159 aa)). The segment at 22-43 (SFRREKFIPRGGPDGGDGGRGG) is disordered. Residues 33 to 43 (GPDGGDGGRGG) show a composition bias toward gly residues. Residues 160 to 334 (ADVGLLGMPN…LVFAIQDFLD (175 aa)) enclose the OBG-type G domain. GTP-binding positions include 166 to 173 (GMPNAGKS), 191 to 195 (FTTLA), 213 to 216 (DIPG), 284 to 287 (NKLD), and 315 to 317 (SAL). Mg(2+)-binding residues include S173 and T193. The segment at 373 to 404 (LLAEGETGTGDDGRDGNENDPADEQDTNRPNH) is disordered.

It belongs to the TRAFAC class OBG-HflX-like GTPase superfamily. OBG GTPase family. As to quaternary structure, monomer. It depends on Mg(2+) as a cofactor.

The protein resides in the cytoplasm. An essential GTPase which binds GTP, GDP and possibly (p)ppGpp with moderate affinity, with high nucleotide exchange rates and a fairly low GTP hydrolysis rate. Plays a role in control of the cell cycle, stress response, ribosome biogenesis and in those bacteria that undergo differentiation, in morphogenesis control. The polypeptide is GTPase Obg (Aromatoleum aromaticum (strain DSM 19018 / LMG 30748 / EbN1) (Azoarcus sp. (strain EbN1))).